A 436-amino-acid polypeptide reads, in one-letter code: Hydrogenobyrinate a,c-diamide synthase (436 aa).

One can recognise a GATase cobBQ-type domain in the interval 244–435 (RIAVARDDAF…MHVIDFSGEA (192 aa)). The active-site Nucleophile is C327.

Belongs to the CobB/CbiA family. It depends on Mg(2+) as a cofactor.

The enzyme catalyses hydrogenobyrinate + 2 L-glutamine + 2 ATP + 2 H2O = hydrogenobyrinate a,c-diamide + 2 L-glutamate + 2 ADP + 2 phosphate + 2 H(+). It participates in cofactor biosynthesis; adenosylcobalamin biosynthesis; cob(II)yrinate a,c-diamide from precorrin-2 (aerobic route): step 9/10. Its function is as follows. Catalyzes the ATP-dependent amidation of the two carboxylate groups at positions a and c of hydrogenobyrinate, using either L-glutamine or ammonia as the nitrogen source. The sequence is that of Hydrogenobyrinate a,c-diamide synthase from Brucella suis biovar 1 (strain 1330).